Reading from the N-terminus, the 222-residue chain is Peptide methionine sulfoxide reductase MsrA (222 aa).

Residue C54 is part of the active site.

It belongs to the MsrA Met sulfoxide reductase family.

It carries out the reaction L-methionyl-[protein] + [thioredoxin]-disulfide + H2O = L-methionyl-(S)-S-oxide-[protein] + [thioredoxin]-dithiol. The catalysed reaction is [thioredoxin]-disulfide + L-methionine + H2O = L-methionine (S)-S-oxide + [thioredoxin]-dithiol. In terms of biological role, has an important function as a repair enzyme for proteins that have been inactivated by oxidation. Catalyzes the reversible oxidation-reduction of methionine sulfoxide in proteins to methionine. The protein is Peptide methionine sulfoxide reductase MsrA of Methylococcus capsulatus (strain ATCC 33009 / NCIMB 11132 / Bath).